An 84-amino-acid chain; its full sequence is Large ribosomal subunit protein eL34 (84 aa).

The protein belongs to the eukaryotic ribosomal protein eL34 family.

This is Large ribosomal subunit protein eL34 from Pyrobaculum islandicum (strain DSM 4184 / JCM 9189 / GEO3).